The following is a 250-amino-acid chain: 2,5-dichloro-2,5-cyclohexadiene-1,4-diol dehydrogenase (250 aa).

NAD(+) is bound at residue 9–34 (IIVTGGGSGIGRATVELLVASGANVA). Ser-141 contacts substrate. The active-site Proton acceptor is Tyr-154.

This sequence belongs to the short-chain dehydrogenases/reductases (SDR) family.

It catalyses the reaction 2,5-dichlorocyclohexa-2,5-dien-1,4-diol + NAD(+) = 2,5-dichlorohydroquinone + NADH + H(+). Its pathway is xenobiotic degradation; gamma-hexachlorocyclohexane degradation. Catalyzes the dehydrogenation of 2,5-dichloro-2,5-cyclohexadiene-1,4-diol (2,5-DDOL) to 2,5-dichlorohydroquinone (2,5-DCHQ), a step in the degradation of gamma-hexachlorocyclohexane (gamma-HCH or lindane). This chain is 2,5-dichloro-2,5-cyclohexadiene-1,4-diol dehydrogenase, found in Sphingobium indicum (strain DSM 16412 / CCM 7286 / MTCC 6364 / B90A).